A 172-amino-acid chain; its full sequence is Protein-export protein SecB (172 aa).

This sequence belongs to the SecB family. Homotetramer, a dimer of dimers. One homotetramer interacts with 1 SecA dimer.

It is found in the cytoplasm. Its function is as follows. One of the proteins required for the normal export of preproteins out of the cell cytoplasm. It is a molecular chaperone that binds to a subset of precursor proteins, maintaining them in a translocation-competent state. It also specifically binds to its receptor SecA. The sequence is that of Protein-export protein SecB from Dinoroseobacter shibae (strain DSM 16493 / NCIMB 14021 / DFL 12).